Reading from the N-terminus, the 99-residue chain is Protein translation factor SUI1 homolog (99 aa).

This sequence belongs to the SUI1 family.

In Sulfolobus acidocaldarius (strain ATCC 33909 / DSM 639 / JCM 8929 / NBRC 15157 / NCIMB 11770), this protein is Protein translation factor SUI1 homolog.